We begin with the raw amino-acid sequence, 92 residues long: MTDTTAPEAGAPAAAAGGARRPFFRRRKVCPFSGANAPKIDYKDVKLLQRYVSERGKIVPSRITAVSAKKQRELAKAIKRARFLALLPYVVK.

This sequence belongs to the bacterial ribosomal protein bS18 family. Part of the 30S ribosomal subunit. Forms a tight heterodimer with protein bS6.

In terms of biological role, binds as a heterodimer with protein bS6 to the central domain of the 16S rRNA, where it helps stabilize the platform of the 30S subunit. The protein is Small ribosomal subunit protein bS18 of Caulobacter sp. (strain K31).